The chain runs to 323 residues: Phospho-N-acetylmuramoyl-pentapeptide-transferase (323 aa).

The next 9 membrane-spanning stretches (helical) occupy residues 12 to 32 (IVMAIVISFIVASILGPIIIP), 58 to 78 (PTIGGLIFIFATIITMFVMVG), 84 to 104 (AMIALYSFVGFGFVGFLDDLL), 120 to 140 (MILLLIISGFLTWYAYKYIGT), 151 to 171 (INLGLFYIPAAMFYFAGVTNA), 177 to 197 (GLDGLATSVTVLVTTFLGIIS), 200 to 220 (LGHISLAIFCVALAGALLAFL), 229 to 250 (VFMGDTGSLALGGAVAMVALIL), and 303 to 323 (KIVSVFSIITVVFCFIAFASL).

It belongs to the glycosyltransferase 4 family. MraY subfamily. The cofactor is Mg(2+).

The protein localises to the cell membrane. The enzyme catalyses UDP-N-acetyl-alpha-D-muramoyl-L-alanyl-gamma-D-glutamyl-meso-2,6-diaminopimeloyl-D-alanyl-D-alanine + di-trans,octa-cis-undecaprenyl phosphate = di-trans,octa-cis-undecaprenyl diphospho-N-acetyl-alpha-D-muramoyl-L-alanyl-D-glutamyl-meso-2,6-diaminopimeloyl-D-alanyl-D-alanine + UMP. Its pathway is cell wall biogenesis; peptidoglycan biosynthesis. In terms of biological role, catalyzes the initial step of the lipid cycle reactions in the biosynthesis of the cell wall peptidoglycan: transfers peptidoglycan precursor phospho-MurNAc-pentapeptide from UDP-MurNAc-pentapeptide onto the lipid carrier undecaprenyl phosphate, yielding undecaprenyl-pyrophosphoryl-MurNAc-pentapeptide, known as lipid I. This chain is Phospho-N-acetylmuramoyl-pentapeptide-transferase, found in Clostridium perfringens (strain SM101 / Type A).